Here is a 245-residue protein sequence, read N- to C-terminus: MTLLISNDDGVYAPGLNALYHALKDLADVKVVAPDRNHSGASNALTLENPLRLQYLDNGFIAVSGTPTDCVHLALNKICITVPKLVVSGINHGANMGDDVLYSGTVAAAMEGRFLGLPAIAISLAGQTHFESAAFYAKQLVGKLLASPLSTDQVLNVNVPDLPLAQIKGIKITRLGKRHKAEMIEKSVDPRGKEIFWVGPPGKIAEAGDGTDFHAIENGYVSITPLKIDLTATEQLSDLTKWLDK.

Residues D8, D9, S39, and N91 each coordinate a divalent metal cation.

Belongs to the SurE nucleotidase family. The cofactor is a divalent metal cation.

Its subcellular location is the cytoplasm. The catalysed reaction is a ribonucleoside 5'-phosphate + H2O = a ribonucleoside + phosphate. In terms of biological role, nucleotidase that shows phosphatase activity on nucleoside 5'-monophosphates. The chain is 5'-nucleotidase SurE from Psychromonas ingrahamii (strain DSM 17664 / CCUG 51855 / 37).